The sequence spans 1128 residues: Nck-associated protein 1 (1128 aa).

The segment at 640 to 665 (AVNKKSKKQTGKKGEPEREKPGVESM) is disordered. Over residues 651 to 665 (KKGEPEREKPGVESM) the composition is skewed to basic and acidic residues. A helical transmembrane segment spans residues 995–1015 (IACLLMVFVAVSLPTLASNVM).

The protein belongs to the HEM-1/HEM-2 family.

The protein resides in the cell membrane. It is found in the cell projection. Its subcellular location is the lamellipodium membrane. In terms of biological role, part of the WAVE complex that regulates lamellipodia formation. The WAVE complex regulates actin filament reorganization via its interaction with the Arp2/3 complex. Actin remodeling activity is regulated by RAC1. Plays a role in neural tube closure. In Xenopus laevis (African clawed frog), this protein is Nck-associated protein 1 (nckap1).